The primary structure comprises 908 residues: SKI/DACH domain-containing protein 1 (908 aa).

Over residues 337–353 (HHHHHHHHHHHHHHHRA) the composition is skewed to basic residues. Positions 337 to 461 (HHHHHHHHHH…SSSGSSQVSV (125 aa)) are disordered. Low complexity-rich tracts occupy residues 370–389 (PHLG…SSYS) and 396–410 (SDFG…NSVS). Residues 411–429 (SEEEEEEGEEEEEEEEEEG) are compositionally biased toward acidic residues. Over residues 449 to 461 (ESDSSSGSSQVSV) the composition is skewed to low complexity. A Glycyl lysine isopeptide (Lys-Gly) (interchain with G-Cter in SUMO2) cross-link involves residue lysine 688. Disordered stretches follow at residues 744–763 (ETPS…TLGS) and 792–818 (LQTP…TNEG). A compositionally biased stretch (polar residues) spans 746-761 (PSLNPLAQSQGLSCTL).

It belongs to the DACH/dachshund family.

This is SKI/DACH domain-containing protein 1 (SKIDA1) from Homo sapiens (Human).